The following is a 399-amino-acid chain: S-adenosylmethionine synthase (399 aa).

Histidine 17 contacts ATP. Aspartate 19 contributes to the Mg(2+) binding site. K(+) is bound at residue glutamate 45. Residues glutamate 58 and glutamine 101 each coordinate L-methionine. A flexible loop region spans residues 101-111 (QSPDIAQGVDE). Residues 177 to 179 (DAK), 244 to 245 (RF), aspartate 253, 259 to 260 (RK), alanine 276, and lysine 280 contribute to the ATP site. Aspartate 253 serves as a coordination point for L-methionine. Lysine 284 is an L-methionine binding site.

It belongs to the AdoMet synthase family. In terms of assembly, homotetramer; dimer of dimers. It depends on Mg(2+) as a cofactor. K(+) serves as cofactor.

The protein localises to the cytoplasm. The enzyme catalyses L-methionine + ATP + H2O = S-adenosyl-L-methionine + phosphate + diphosphate. Its pathway is amino-acid biosynthesis; S-adenosyl-L-methionine biosynthesis; S-adenosyl-L-methionine from L-methionine: step 1/1. Catalyzes the formation of S-adenosylmethionine (AdoMet) from methionine and ATP. The overall synthetic reaction is composed of two sequential steps, AdoMet formation and the subsequent tripolyphosphate hydrolysis which occurs prior to release of AdoMet from the enzyme. This chain is S-adenosylmethionine synthase, found in Listeria innocua serovar 6a (strain ATCC BAA-680 / CLIP 11262).